Reading from the N-terminus, the 435-residue chain is NADH-quinone oxidoreductase subunit D (435 aa).

It belongs to the complex I 49 kDa subunit family. As to quaternary structure, NDH-1 is composed of 14 different subunits. Subunits NuoB, C, D, E, F, and G constitute the peripheral sector of the complex.

The protein localises to the cell membrane. It carries out the reaction a quinone + NADH + 5 H(+)(in) = a quinol + NAD(+) + 4 H(+)(out). Functionally, NDH-1 shuttles electrons from NADH, via FMN and iron-sulfur (Fe-S) centers, to quinones in the respiratory chain. The immediate electron acceptor for the enzyme in this species is believed to be ubiquinone. Couples the redox reaction to proton translocation (for every two electrons transferred, four hydrogen ions are translocated across the cytoplasmic membrane), and thus conserves the redox energy in a proton gradient. The chain is NADH-quinone oxidoreductase subunit D from Stenotrophomonas maltophilia (strain K279a).